A 200-amino-acid polypeptide reads, in one-letter code: NAD(P)H dehydrogenase (quinone) (200 aa).

Residues 4–191 (VLVLYYSSYG…DIARYQGKRV (188 aa)) enclose the Flavodoxin-like domain. FMN is bound by residues 10-15 (SSYGHV) and 79-81 (TRF). Tyr12 serves as a coordination point for NAD(+). Trp99 is a substrate binding site. FMN is bound by residues 114 to 120 (STGTQHG) and His135.

It belongs to the WrbA family. Requires FMN as cofactor.

The catalysed reaction is a quinone + NADH + H(+) = a quinol + NAD(+). The enzyme catalyses a quinone + NADPH + H(+) = a quinol + NADP(+). In Burkholderia lata (strain ATCC 17760 / DSM 23089 / LMG 22485 / NCIMB 9086 / R18194 / 383), this protein is NAD(P)H dehydrogenase (quinone).